Reading from the N-terminus, the 1178-residue chain is Pesticidal crystal protein Cry1Ac (1178 aa).

It belongs to the delta endotoxin family.

Its function is as follows. Promotes colloidosmotic lysis by binding to the midgut epithelial cells of many lepidopteran larvae. The chain is Pesticidal crystal protein Cry1Ac (cry1Ac) from Bacillus thuringiensis subsp. kurstaki.